Reading from the N-terminus, the 397-residue chain is Digeranylgeranylglycerophospholipid reductase 1 (397 aa).

The FAD site is built by alanine 18, aspartate 37, cysteine 48, alanine 49, glycine 51, arginine 104, alanine 128, aspartate 284, glycine 296, and isoleucine 297.

This sequence belongs to the geranylgeranyl reductase family. DGGGPL reductase subfamily. The cofactor is FAD.

It catalyses the reaction a 2,3-bis-O-phytanyl-sn-glycerol 1-phospholipid + 8 A = a 2,3-bis-O-(geranylgeranyl)-sn-glycerol 1-phospholipid + 8 AH2. It carries out the reaction 2,3-bis-O-(phytanyl)-sn-glycerol 1-phosphate + 8 A = 2,3-bis-O-(geranylgeranyl)-sn-glycerol 1-phosphate + 8 AH2. The catalysed reaction is CDP-2,3-bis-O-(geranylgeranyl)-sn-glycerol + 8 AH2 = CDP-2,3-bis-O-(phytanyl)-sn-glycerol + 8 A. The enzyme catalyses archaetidylserine + 8 AH2 = 2,3-bis-O-phytanyl-sn-glycero-3-phospho-L-serine + 8 A. Its pathway is membrane lipid metabolism; glycerophospholipid metabolism. Is involved in the reduction of 2,3-digeranylgeranylglycerophospholipids (unsaturated archaeols) into 2,3-diphytanylglycerophospholipids (saturated archaeols) in the biosynthesis of archaeal membrane lipids. Catalyzes the formation of archaetidic acid (2,3-di-O-phytanyl-sn-glyceryl phosphate) from 2,3-di-O-geranylgeranylglyceryl phosphate (DGGGP) via the hydrogenation of each double bond of the isoprenoid chains. Is also probably able to reduce double bonds of geranyl groups in CDP-2,3-bis-O-(geranylgeranyl)-sn-glycerol and archaetidylserine, thus acting at various stages in the biosynthesis of archaeal membrane lipids. This chain is Digeranylgeranylglycerophospholipid reductase 1, found in Methanothermobacter thermautotrophicus (strain ATCC 29096 / DSM 1053 / JCM 10044 / NBRC 100330 / Delta H) (Methanobacterium thermoautotrophicum).